Reading from the N-terminus, the 476-residue chain is Bifunctional protein HldE (476 aa).

The segment at 1–319 is ribokinase; sequence MKVSLPAFEK…EALALHHGES (319 aa). 195 to 198 is a binding site for ATP; it reads NMSE. Aspartate 264 is an active-site residue. The segment at 345 to 476 is cytidylyltransferase; that stretch reads MTNGCFDILH…AIIQNIMAKQ (132 aa).

In the N-terminal section; belongs to the carbohydrate kinase PfkB family. This sequence in the C-terminal section; belongs to the cytidylyltransferase family. As to quaternary structure, homodimer.

It carries out the reaction D-glycero-beta-D-manno-heptose 7-phosphate + ATP = D-glycero-beta-D-manno-heptose 1,7-bisphosphate + ADP + H(+). It catalyses the reaction D-glycero-beta-D-manno-heptose 1-phosphate + ATP + H(+) = ADP-D-glycero-beta-D-manno-heptose + diphosphate. Its pathway is nucleotide-sugar biosynthesis; ADP-L-glycero-beta-D-manno-heptose biosynthesis; ADP-L-glycero-beta-D-manno-heptose from D-glycero-beta-D-manno-heptose 7-phosphate: step 1/4. The protein operates within nucleotide-sugar biosynthesis; ADP-L-glycero-beta-D-manno-heptose biosynthesis; ADP-L-glycero-beta-D-manno-heptose from D-glycero-beta-D-manno-heptose 7-phosphate: step 3/4. Its function is as follows. Catalyzes the phosphorylation of D-glycero-D-manno-heptose 7-phosphate at the C-1 position to selectively form D-glycero-beta-D-manno-heptose-1,7-bisphosphate. Functionally, catalyzes the ADP transfer from ATP to D-glycero-beta-D-manno-heptose 1-phosphate, yielding ADP-D-glycero-beta-D-manno-heptose. This chain is Bifunctional protein HldE, found in Shewanella sp. (strain ANA-3).